Consider the following 382-residue polypeptide: F-box protein At3g27290 (382 aa).

The 90-residue stretch at 16–105 (RKLELGLGEF…VDQMLFETLS (90 aa)) folds into the F-box domain.

The sequence is that of F-box protein At3g27290 from Arabidopsis thaliana (Mouse-ear cress).